Consider the following 172-residue polypeptide: MAIVYNRVKSTNDLELKDRLVAINRVTKVTKGGRTFTFAAIVVVGNEDGVIGWGLGKAGEVPAAIAKGVEAAKKNLIRVPVHNGTIPHEQAASYGGASVFLKPATTGTGVKAGGAMRAVLDSVGVTDVLAKSKGSSNPHNLVKATIQALAEMRSPLMVAQNRGISVEKVFKG.

In terms of domain architecture, S5 DRBM spans 16–79 (LKDRLVAINR…EAAKKNLIRV (64 aa)).

It belongs to the universal ribosomal protein uS5 family. In terms of assembly, part of the 30S ribosomal subunit. Contacts proteins S4 and S8.

In terms of biological role, with S4 and S12 plays an important role in translational accuracy. Its function is as follows. Located at the back of the 30S subunit body where it stabilizes the conformation of the head with respect to the body. In Porphyromonas gingivalis (strain ATCC BAA-308 / W83), this protein is Small ribosomal subunit protein uS5.